Consider the following 709-residue polypeptide: Mucin-20 (709 aa).

Residues 1–25 form the signal peptide; it reads MGCLWGLALPLFFFCWEVGVSGSSA. Residues 57–69 are compositionally biased toward polar residues; sequence TQTLSAETSSRAS. Disordered stretches follow at residues 57-92 and 170-403; these read TQTL…ARET and KGLS…WSPG. The segment covering 78–92 has biased composition (basic and acidic residues); that stretch reads AETRGAKRISPARET. Composition is skewed to low complexity over residues 173–182, 190–199, 209–218, 228–237, 247–256, 266–275, 285–294, 304–313, 323–332, 342–351, 361–370, and 380–389; these read SSESSASSDS and SRASESSASS. 11 tandem repeats follow at residues 173–192, 193–211, 212–230, 231–249, 250–268, 269–287, 288–306, 307–325, 326–344, 345–363, and 364–382. The interval 173-400 is 12 X 20 AA approximate tandem repeats of S-S-E-S-S-A-S-S-D-S-P-H-P-V-I-T-P-S-R-A; the sequence is SSESSASSDS…GPHPVITPSW (228 aa). Residues 383-400 form a 12; approximate repeat; the sequence is SESSASSDGPHPVITPSW. N423 carries an N-linked (GlcNAc...) asparagine glycan. 2 disordered regions span residues 434–515 and 583–657; these read SSIP…APGA and NFTP…VSAG. The interval 450–656 is involved in oligomerization; it reads VKASSTSDPP…RTRPTTDVSA (207 aa). Residues 474-489 are compositionally biased toward polar residues; sequence VTASAETLSTAGTTES. The segment covering 613 to 652 has biased composition (low complexity); the sequence is TTTNSSRGTNSTLAKITTSAKTTMKPPTATPTTARTRPTT. Residues N616 and N622 are each glycosylated (N-linked (GlcNAc...) asparagine). The segment at 657–709 is interaction with MET; that stretch reads GENGGFLLLRLSVASPEDLTDPRVAERLMQQLHRELHAHAPHFQVSLLRVRRG.

Interacts with MET; oligomerization increases affinity for MET. As to expression, highly expressed in kidney, moderately in placenta, lung, prostate, liver, and digestive system. In the kidney, localized in the proximal tubules but not in the glomerulus or distal tubules. Detected in most of the male urogenital tract epithelia, with the exception of epididymis.

It localises to the secreted. Its subcellular location is the apical cell membrane. It is found in the basolateral cell membrane. The protein localises to the cell projection. The protein resides in the microvillus membrane. May regulate MET signaling cascade. Seems to decrease hepatocyte growth factor (HGF)-induced transient MAPK activation. Blocks GRB2 recruitment to MET thus suppressing the GRB2-RAS pathway. Inhibits HGF-induced proliferation of MMP1 and MMP9 expression. This is Mucin-20 (MUC20) from Homo sapiens (Human).